The chain runs to 698 residues: ATP-dependent RNA helicase DHX33 (698 aa).

2 disordered regions span residues 1-20 and 29-50; these read MPEEASLPPAKRFRPGSCPP and TAGGGGGAGGGRRQTPPLAQPS. The interval 1-71 is required for nucleolar location; it reads MPEEASLPPA…RRSLPIFRAR (71 aa). Residues 30 to 40 show a composition bias toward gly residues; sequence AGGGGGAGGGR. One can recognise a Helicase ATP-binding domain in the interval 75–243; sequence LAQLRNLDNA…FNRAPVLYLE (169 aa). 88-95 lines the ATP pocket; it reads GETGSGKT. A DEAH box motif is present at residues 185-188; sequence DEAH. A Helicase C-terminal domain is found at 271-441; that stretch reads QIHQEAPASQ…SVILQLLAMK (171 aa). Residues 462–553 are HA2; required for interaction with EIF3G and RPL26; the sequence is AIAQLDLLGA…ISSEGDHITL (92 aa). Residues 536 to 550 carry the Critical for rDNA-binding motif; the sequence is VQSVRKKFISSEGDH.

This sequence belongs to the DEAD box helicase family. DEAH subfamily. As to quaternary structure, interacts with UBTF. Interacts with DDX3X, EIF3G and EIF3H; the interaction is independent of RNA. Interacts (via HA2 region and Helicase C-terminal domain) with the components of the large ribosomal subunit RPL3, RPL7, RPL26 and RPL27. Binds to mRNA. Interacts (via the helicase C-terminal domain) with MAVS. Binds to double-stranded RNA (via the helicase C-terminal domain). Ubiquitinated, leading to its degradation by the proteasome. Deubiquitinated by USP36.

The protein localises to the nucleus. It localises to the nucleolus. The protein resides in the nucleoplasm. It is found in the cytoplasm. Its subcellular location is the inflammasome. It carries out the reaction ATP + H2O = ADP + phosphate + H(+). Functionally, implicated in nucleolar organization, ribosome biogenesis, protein synthesis and cytoplasmic dsRNA sensing. Stimulates RNA polymerase I transcription of the 47S precursor rRNA. Associates with ribosomal DNA (rDNA) loci where it is involved in POLR1A recruitment. In the cytoplasm, promotes elongation-competent 80S ribosome assembly at the late stage of mRNA translation initiation. Senses cytosolic dsRNA mediating NLRP3 inflammasome formation in macrophages and type I interferon production in myeloid dendritic cells. Required for NLRP3 activation induced by viral dsRNA and bacterial RNA. In dendritic cells, required for induction of type I interferon production induced by cytoplasmic dsRNA via the activation of MAPK and NF-kappa-B signaling pathways. This chain is ATP-dependent RNA helicase DHX33, found in Mus musculus (Mouse).